A 399-amino-acid chain; its full sequence is Glutamyl-tRNA reductase (399 aa).

Substrate-binding positions include 45–48, serine 93, 98–100, and glutamine 104; these read TCNR and EDQ. Catalysis depends on cysteine 46, which acts as the Nucleophile. 173 to 178 serves as a coordination point for NADP(+); the sequence is GAGKMG.

This sequence belongs to the glutamyl-tRNA reductase family. Homodimer.

The enzyme catalyses (S)-4-amino-5-oxopentanoate + tRNA(Glu) + NADP(+) = L-glutamyl-tRNA(Glu) + NADPH + H(+). It participates in porphyrin-containing compound metabolism; protoporphyrin-IX biosynthesis; 5-aminolevulinate from L-glutamyl-tRNA(Glu): step 1/2. Its function is as follows. Catalyzes the NADPH-dependent reduction of glutamyl-tRNA(Glu) to glutamate 1-semialdehyde (GSA). The chain is Glutamyl-tRNA reductase from Methanobrevibacter smithii (strain ATCC 35061 / DSM 861 / OCM 144 / PS).